A 717-amino-acid chain; its full sequence is Cleavage stimulation factor subunit 3 (717 aa).

S2 bears the N-acetylserine mark. 9 HAT repeats span residues 45–77 (QPID…AEIK), 79–110 (KNYD…YVRE), 117–152 (SYKE…FLKG), 163–196 (QRIT…YEEG), 221–261 (KEYE…WEKS), 271–303 (LITK…YLEQ), 319–352 (LFSD…YEES), 354–387 (MKYE…FARR), and 458–494 (NEDN…FESN). The disordered stretch occupies residues 684–705 (VKRPNEDSDEDEEKGAVVPPVH). S691 bears the Phosphoserine mark.

Homodimer. The CSTF complex is composed of CSTF1 (50 kDa subunit), CSTF2 (64 kDa subunit) and CSTF3 (77 kDa subunit). CSTF3 directly interacts with CSTF1 and CSTF2. Interacts with FIP1L1.

Its subcellular location is the nucleus. One of the multiple factors required for polyadenylation and 3'-end cleavage of mammalian pre-mRNAs. This is Cleavage stimulation factor subunit 3 (CSTF3) from Homo sapiens (Human).